A 406-amino-acid chain; its full sequence is NADH-quinone oxidoreductase subunit D (406 aa).

The protein belongs to the complex I 49 kDa subunit family. NDH-1 is composed of 14 different subunits. Subunits NuoB, C, D, E, F, and G constitute the peripheral sector of the complex.

It is found in the cell inner membrane. The catalysed reaction is a quinone + NADH + 5 H(+)(in) = a quinol + NAD(+) + 4 H(+)(out). In terms of biological role, NDH-1 shuttles electrons from NADH, via FMN and iron-sulfur (Fe-S) centers, to quinones in the respiratory chain. The immediate electron acceptor for the enzyme in this species is believed to be ubiquinone. Couples the redox reaction to proton translocation (for every two electrons transferred, four hydrogen ions are translocated across the cytoplasmic membrane), and thus conserves the redox energy in a proton gradient. This is NADH-quinone oxidoreductase subunit D from Leptospira biflexa serovar Patoc (strain Patoc 1 / Ames).